A 71-amino-acid chain; its full sequence is Dermonecrotic toxin LgSicTox-alphaI-Loxn-A (71 aa).

H12 is a catalytic residue. The Mg(2+) site is built by E32, D34, and D48.

Requires Mg(2+) as cofactor. In terms of processing, contains 2 disulfide bonds. In terms of tissue distribution, expressed by the venom gland.

It localises to the secreted. The enzyme catalyses an N-(acyl)-sphingosylphosphocholine = an N-(acyl)-sphingosyl-1,3-cyclic phosphate + choline. It catalyses the reaction an N-(acyl)-sphingosylphosphoethanolamine = an N-(acyl)-sphingosyl-1,3-cyclic phosphate + ethanolamine. The catalysed reaction is a 1-acyl-sn-glycero-3-phosphocholine = a 1-acyl-sn-glycero-2,3-cyclic phosphate + choline. It carries out the reaction a 1-acyl-sn-glycero-3-phosphoethanolamine = a 1-acyl-sn-glycero-2,3-cyclic phosphate + ethanolamine. Functionally, catalyzes the hydrolysis of sphingomyelin. May also act on other phosphatidyl esters. In terms of biological role, dermonecrotic toxins cleave the phosphodiester linkage between the phosphate and headgroup of certain phospholipids (sphingolipid and lysolipid substrates), forming an alcohol (often choline) and a cyclic phosphate. This toxin acts on sphingomyelin (SM). It may also act on ceramide phosphoethanolamine (CPE), lysophosphatidylcholine (LPC) and lysophosphatidylethanolamine (LPE), but not on lysophosphatidylserine (LPS), and lysophosphatidylglycerol (LPG). It acts by transphosphatidylation, releasing exclusively cyclic phosphate products as second products. In vivo, induces dermonecrosis, but is not lethal. Induces hemolysis, vascular permeability, edema, inflammatory response, and platelet aggregation. The polypeptide is Dermonecrotic toxin LgSicTox-alphaI-Loxn-A (Loxosceles gaucho (Spider)).